A 252-amino-acid polypeptide reads, in one-letter code: Imidazole glycerol phosphate synthase subunit HisF (252 aa).

Residues aspartate 11 and aspartate 130 contribute to the active site.

The protein belongs to the HisA/HisF family. As to quaternary structure, heterodimer of HisH and HisF.

The protein resides in the cytoplasm. It catalyses the reaction 5-[(5-phospho-1-deoxy-D-ribulos-1-ylimino)methylamino]-1-(5-phospho-beta-D-ribosyl)imidazole-4-carboxamide + L-glutamine = D-erythro-1-(imidazol-4-yl)glycerol 3-phosphate + 5-amino-1-(5-phospho-beta-D-ribosyl)imidazole-4-carboxamide + L-glutamate + H(+). It functions in the pathway amino-acid biosynthesis; L-histidine biosynthesis; L-histidine from 5-phospho-alpha-D-ribose 1-diphosphate: step 5/9. Functionally, IGPS catalyzes the conversion of PRFAR and glutamine to IGP, AICAR and glutamate. The HisF subunit catalyzes the cyclization activity that produces IGP and AICAR from PRFAR using the ammonia provided by the HisH subunit. The chain is Imidazole glycerol phosphate synthase subunit HisF from Sulfurihydrogenibium sp. (strain YO3AOP1).